A 324-amino-acid polypeptide reads, in one-letter code: uncharacterized protein (324 aa).

A run of 9 helical transmembrane segments spans residues 34 to 54 (MAVLQSLNIFLGEACLWFYVL), 76 to 96 (VFMALPAIMDICGSTLMNVGL), 103 to 123 (IYQMTRGSLIIFVALFATTLL), 127 to 147 (IGQLQWLSLSFVVLGVAIVGY), 158 to 178 (PILGITAVLIGQFFLATQFTI), 198 to 218 (GTYGVFFVLLGMIISYYFIGS), 243 to 263 (YVISGVILVSIAFFNVSGLAI), 275 to 295 (LDIARTFGIWIIAMAMGMESF), and 297 to 317 (LLQFLGFVLLIYGIFTYHSII).

Its subcellular location is the membrane. This is an uncharacterized protein from Schizosaccharomyces pombe (strain 972 / ATCC 24843) (Fission yeast).